We begin with the raw amino-acid sequence, 354 residues long: MTGANDTPYLLRAARGEILDRPPVWMMRQAGRYMKVYRDLRDKYPSFRERSENPDLAIEISLQPWRAFQPDGVIMFSDILTPLPGMGIPFDIVESKGPVIDPPIRTKEQVDNLRPLDPEESLPFIKTILQSLRQEVGNQSTVLGFVGSPWTLAAYAIEGKSSKNYAIIKSMAFSQPEILHSFLSKIADAIAIYVRYQIDCGAQVVQLFDSWAGQLSPQDYETFALPYQQQVVRQVKETHPDTPLILYISGSAGVLERMGQSGVDIVSVDWTVDMAEARQRLGRDMKVQGNIDPGVLFGSQDFIKARILDTVRKAGRGGHILNLGHGVLVGTPEDNVRCFFETAKQVDQLLAVPV.

Residues 28-32 (RQAGR), D78, Y155, S210, and H325 each bind substrate.

This sequence belongs to the uroporphyrinogen decarboxylase family. Homodimer.

It localises to the cytoplasm. It carries out the reaction uroporphyrinogen III + 4 H(+) = coproporphyrinogen III + 4 CO2. The protein operates within porphyrin-containing compound metabolism; protoporphyrin-IX biosynthesis; coproporphyrinogen-III from 5-aminolevulinate: step 4/4. Functionally, catalyzes the decarboxylation of four acetate groups of uroporphyrinogen-III to yield coproporphyrinogen-III. The polypeptide is Uroporphyrinogen decarboxylase (Crocosphaera subtropica (strain ATCC 51142 / BH68) (Cyanothece sp. (strain ATCC 51142))).